The chain runs to 274 residues: 3-methyl-2-oxobutanoate hydroxymethyltransferase (274 aa).

Mg(2+)-binding residues include aspartate 44 and aspartate 83. 3-methyl-2-oxobutanoate contacts are provided by residues 44-45 (DS), aspartate 83, and lysine 113. Glutamate 115 contributes to the Mg(2+) binding site. The active-site Proton acceptor is the glutamate 182.

This sequence belongs to the PanB family. As to quaternary structure, homodecamer; pentamer of dimers. Mg(2+) is required as a cofactor.

The protein localises to the cytoplasm. The catalysed reaction is 3-methyl-2-oxobutanoate + (6R)-5,10-methylene-5,6,7,8-tetrahydrofolate + H2O = 2-dehydropantoate + (6S)-5,6,7,8-tetrahydrofolate. It participates in cofactor biosynthesis; (R)-pantothenate biosynthesis; (R)-pantoate from 3-methyl-2-oxobutanoate: step 1/2. Catalyzes the reversible reaction in which hydroxymethyl group from 5,10-methylenetetrahydrofolate is transferred onto alpha-ketoisovalerate to form ketopantoate. This Campylobacter jejuni (strain RM1221) protein is 3-methyl-2-oxobutanoate hydroxymethyltransferase.